A 494-amino-acid chain; its full sequence is Sphingosine-1-phosphate transporter MFSD2B (494 aa).

Over residues 1-12 (MSVPHGPTPAPV) the composition is skewed to pro residues. The segment at 1–26 (MSVPHGPTPAPVAEPHTQEPGSDKRD) is disordered. 10 consecutive transmembrane segments (helical) span residues 103-123 (LMPW…FLWF), 140-160 (CLFQ…TMIL), 179-199 (MAGT…AHGS), 223-243 (IAAA…CLGV), 277-297 (VVSF…LVLF), 310-330 (NLVL…EWVL), 339-359 (AFGI…PSAP), 360-380 (VAYV…LLPW), 402-422 (TIFY…ALGI), and 449-469 (VLIG…LLVG). Residues 473-494 (KMPRQDTSSQLSLRRRTSYSLA) form a disordered region. The span at 485–494 (LRRRTSYSLA) shows a compositional bias: basic residues.

The protein belongs to the major facilitator superfamily. In terms of tissue distribution, widely expressed with highest expression in spleen, lung and testis. Predominantly expressed in erythroid lineages giving rise to erythrocytes and platelets, but absent in lymphoid lineages.

The protein localises to the cell membrane. The catalysed reaction is sphing-4-enine 1-phosphate(in) = sphing-4-enine 1-phosphate(out). It catalyses the reaction sphinganine 1-phosphate(in) = sphinganine 1-phosphate(out). The enzyme catalyses sphinga-4E,14Z-dienine-1-phosphate(in) = sphinga-4E,14Z-dienine-1-phosphate(out). Lipid transporter that specifically mediates export of sphingosine-1-phosphate in red blood cells and platelets. Sphingosine-1-phosphate is a signaling sphingolipid and its export from red blood cells into in the plasma is required for red blood cell morphology. Sphingosine-1-phosphate export from platelets is required for platelet aggregation and thrombus formation. Mediates the export of different sphingosine-1-phosphate (S1P) species, including S1P(d18:0) (sphinganine 1-phosphate), S1P (d18:1) (sphing-4-enine 1-phosphate) and S1P (d18:2) (sphinga-4E,14Z-dienine-1-phosphate). Release of sphingosine-1-phosphate is facilitated by a proton gradient. In contrast, cations, such as sodium, are not required to drive sphingosine-1-phosphate transport. In addition to export, also able to mediate S1P import. Does not transport lysophosphatidylcholine (LPC). The protein is Sphingosine-1-phosphate transporter MFSD2B of Mus musculus (Mouse).